Here is a 517-residue protein sequence, read N- to C-terminus: ATP synthase subunit alpha 2 (517 aa).

Residue 173–180 (GDRQTGKT) participates in ATP binding.

It belongs to the ATPase alpha/beta chains family. As to quaternary structure, F-type ATPases have 2 components, CF(1) - the catalytic core - and CF(0) - the membrane proton channel. CF(1) has five subunits: alpha(3), beta(3), gamma(1), delta(1), epsilon(1). CF(0) has three main subunits: a(1), b(2) and c(9-12). The alpha and beta chains form an alternating ring which encloses part of the gamma chain. CF(1) is attached to CF(0) by a central stalk formed by the gamma and epsilon chains, while a peripheral stalk is formed by the delta and b chains.

The protein resides in the cell inner membrane. It carries out the reaction ATP + H2O + 4 H(+)(in) = ADP + phosphate + 5 H(+)(out). Produces ATP from ADP in the presence of a proton gradient across the membrane. The alpha chain is a regulatory subunit. This is ATP synthase subunit alpha 2 from Legionella pneumophila (strain Corby).